The chain runs to 127 residues: Large ribosomal subunit protein bL12 (127 aa).

This sequence belongs to the bacterial ribosomal protein bL12 family. Homodimer. Part of the ribosomal stalk of the 50S ribosomal subunit. Forms a multimeric L10(L12)X complex, where L10 forms an elongated spine to which 2 to 4 L12 dimers bind in a sequential fashion. Binds GTP-bound translation factors.

Functionally, forms part of the ribosomal stalk which helps the ribosome interact with GTP-bound translation factors. Is thus essential for accurate translation. The sequence is that of Large ribosomal subunit protein bL12 from Clavibacter michiganensis subsp. michiganensis (strain NCPPB 382).